Consider the following 105-residue polypeptide: NADH dehydrogenase [ubiquinone] 1 beta subcomplex subunit 2, mitochondrial (105 aa).

The N-terminal 33 residues, 1-33, are a transit peptide targeting the mitochondrion; it reads MSALTRLASFARVGGRLFRSGCARTAGDGGVRH. The disordered stretch occupies residues 85 to 105; that stretch reads PYPDPSQWTDEELGIPPDDED. Over residues 93-105 the composition is skewed to acidic residues; that stretch reads TDEELGIPPDDED.

Belongs to the complex I NDUFB2 subunit family. In terms of assembly, complex I is composed of 45 different subunits.

The protein resides in the mitochondrion inner membrane. Its function is as follows. Accessory subunit of the mitochondrial membrane respiratory chain NADH dehydrogenase (Complex I), that is believed not to be involved in catalysis. Complex I functions in the transfer of electrons from NADH to the respiratory chain. The immediate electron acceptor for the enzyme is believed to be ubiquinone. The protein is NADH dehydrogenase [ubiquinone] 1 beta subcomplex subunit 2, mitochondrial (NDUFB2) of Homo sapiens (Human).